Reading from the N-terminus, the 237-residue chain is Ribonuclease PH (237 aa).

Phosphate is bound by residues Arg86 and 124–126 (GTR).

This sequence belongs to the RNase PH family. Homohexameric ring arranged as a trimer of dimers.

It carries out the reaction tRNA(n+1) + phosphate = tRNA(n) + a ribonucleoside 5'-diphosphate. Its function is as follows. Phosphorolytic 3'-5' exoribonuclease that plays an important role in tRNA 3'-end maturation. Removes nucleotide residues following the 3'-CCA terminus of tRNAs; can also add nucleotides to the ends of RNA molecules by using nucleoside diphosphates as substrates, but this may not be physiologically important. Probably plays a role in initiation of 16S rRNA degradation (leading to ribosome degradation) during starvation. The protein is Ribonuclease PH of Tolumonas auensis (strain DSM 9187 / NBRC 110442 / TA 4).